The chain runs to 468 residues: Protein translocase subunit SecY (468 aa).

At 1–20 the chain is on the cytoplasmic side; sequence MGARDVIYAMEKWFPEVERP. The chain crosses the membrane as a helical span at residues 21–47; it reads KKHVPLKEKFVWTGLALVLYYVLAEIP. The Extracellular portion of the chain corresponds to 48–58; that stretch reads VYGIPKKIQDY. An intramembrane region (helical) is located at residues 59–66; it reads FQFLRVVL. The chain crosses the membrane as a discontinuously helical span at residues 59 to 87; it reads FQFLRVVLAGRNGSILTLGIGPIVTAGII. An intramembrane segment occupies 67–78; sequence AGRNGSILTLGI. An intramembrane region (helical) is located at residues 79 to 87; it reads GPIVTAGII. Residues 88 to 108 lie on the Cytoplasmic side of the membrane; sequence LQLLVGSELIRLDLANPEDRR. The helical transmembrane segment at 109 to 133 threads the bilayer; sequence FYQALQRVFSVFMCFFEAAIWVLGG. The Extracellular portion of the chain corresponds to 134–144; the sequence is AFGRVGVDVTY. The helical transmembrane segment at 145–169 threads the bilayer; sequence TIATLMIIQLALGGIILIVLDELVS. The Cytoplasmic segment spans residues 170 to 175; that stretch reads KWGIGS. A helical membrane pass occupies residues 176 to 194; sequence GISLFIAAGVSQRILTRSL. The Extracellular portion of the chain corresponds to 195–239; sequence NPLTDPNIIDPLTGKPAIVGAIPYFIQHILDGDLKGALYRGGSAP. The helical transmembrane segment at 240 to 261 threads the bilayer; the sequence is DMIAVTATIIVFLVVVYFESMR. Topologically, residues 262–285 are cytoplasmic; it reads VEIPLGYRGVTIRGRYPIKFLYVS. Residues 286-307 form a helical membrane-spanning segment; it reads NIPIILTFALYANIQLWARVLD. The Extracellular portion of the chain corresponds to 308 to 346; that stretch reads RFGHPWLGRFDPVTGNPIGGFVLYVIPPRNIFTVIDNPV. The helical transmembrane segment at 347–366 threads the bilayer; sequence RAIIYLILTIIFSLLFGFLW. The Cytoplasmic segment spans residues 367-409; the sequence is VELTGLDARTIARQLQRAGLQIPGFRRDPRTLERVLQKYIPYV. Residues 410-428 form a helical membrane-spanning segment; it reads TFWGSLTVALISVLADFLG. The Extracellular segment spans residues 429–431; that stretch reads ALG. Residues 432–446 form a helical membrane-spanning segment; sequence TGTGILLTVGILYRF. Topologically, residues 447-468 are cytoplasmic; that stretch reads YEEIAREQITEMFPALRRLFKG.

It belongs to the SecY/SEC61-alpha family. As to quaternary structure, component of the Sec protein translocase complex. Heterotrimer consisting of alpha (SecY), beta (SecG) and gamma (SecE) subunits. The heterotrimers can form oligomers, although 1 heterotrimer is thought to be able to translocate proteins. Interacts with the ribosome. May interact with SecDF, and other proteins may be involved.

It is found in the cell membrane. Functionally, the central subunit of the protein translocation channel SecYEG. Consists of two halves formed by TMs 1-5 and 6-10. These two domains form a lateral gate at the front which open onto the bilayer between TMs 2 and 7, and are clamped together by SecE at the back. The channel is closed by both a pore ring composed of hydrophobic SecY resides and a short helix (helix 2A) on the extracellular side of the membrane which forms a plug. The plug probably moves laterally to allow the channel to open. The ring and the pore may move independently. The polypeptide is Protein translocase subunit SecY (Pyrococcus horikoshii (strain ATCC 700860 / DSM 12428 / JCM 9974 / NBRC 100139 / OT-3)).